The sequence spans 867 residues: Replication origin-binding protein (867 aa).

Positions 1–39 (MNVATCTHQTHHAARAPGATSAPGAASGDPLGARRPIGD) are disordered. Positions 15-28 (RAPGATSAPGAASG) are enriched in low complexity. The Helicase ATP-binding domain occupies 86–251 (ASAPTARCVT…CSLRGEKNVH (166 aa)). 99-106 (APMGSGKT) serves as a coordination point for ATP.

It belongs to the herpesviridae OriBP family. As to quaternary structure, homodimer. Interacts with the major DNA-binding protein ICP8. Interacts with the helicase/primase component UL8 and the polymerase accessory protein UL42.

Its subcellular location is the host nucleus. Functionally, functions as a docking protein to recruit essential components of the viral replication machinery to viral DNA origins. In the presence of the major DNA-binding protein, opens dsDNA leading to a conformational change in the origin that facilitates DNA unwinding and subsequent replication. This Human herpesvirus 2 (strain HG52) (HHV-2) protein is Replication origin-binding protein.